The sequence spans 85 residues: Large ribosomal subunit protein bL27 (85 aa).

The tract at residues 1 to 22 is disordered; sequence MAHKKAGGSTKNGRDSESKRLG.

This sequence belongs to the bacterial ribosomal protein bL27 family.

The polypeptide is Large ribosomal subunit protein bL27 (Alteromonas mediterranea (strain DSM 17117 / CIP 110805 / LMG 28347 / Deep ecotype)).